Here is a 324-residue protein sequence, read N- to C-terminus: Probable uridine nucleosidase 1 (324 aa).

The active site involves His-248.

It belongs to the IUNH family.

It is found in the cytoplasm. The enzyme catalyses uridine + H2O = D-ribose + uracil. Its function is as follows. Involved in pyrimidine breakdown. In Oryza sativa subsp. japonica (Rice), this protein is Probable uridine nucleosidase 1 (URH1).